Reading from the N-terminus, the 376-residue chain is NADPH oxidase organizer 1 (376 aa).

Residues 1–131 (MAGPRYPVSV…GFFAPQPLDL (131 aa)) enclose the PX domain. 2 SH3 domains span residues 163 to 225 (LEAQ…EAAP) and 237 to 296 (SSGP…PEGL). The tract at residues 302–376 (GTGFRGGDDP…DSVPHPTTEQ (75 aa)) is disordered. Residues 326–335 (APPPTVPTRP) are compositionally biased toward pro residues. Residues 328–337 (PPTVPTRPSP) are proline-rich region; mediates mutually exclusive interactions with itself and NOXA1.

As to quaternary structure, interacts with NOX1, NOXA1, CYBA/p22phox and NCF2/p67phox. Interacts with SH3PXD2A and SH3PXD2B. Expressed in testis, small and large intestines, liver, kidney and pancreas. Isoform 3 is mainly expressed in colon. Isoform 1 is preferentially expressed in testis.

The protein resides in the cell membrane. Constitutively potentiates the superoxide-generating activity of NOX1 and NOX3 and is required for the biogenesis of otoconia/otolith, which are crystalline structures of the inner ear involved in the perception of gravity. Isoform 3 is more potent than isoform 1 in activating NOX3. Together with NOXA1, may also substitute to NCF1/p47phox and NCF2/p67phox in supporting the phagocyte NOX2/gp91phox superoxide-generating activity. This Homo sapiens (Human) protein is NADPH oxidase organizer 1 (NOXO1).